Reading from the N-terminus, the 355-residue chain is UDP-N-acetylglucosamine--N-acetylmuramyl-(pentapeptide) pyrophosphoryl-undecaprenol N-acetylglucosamine transferase (355 aa).

UDP-N-acetyl-alpha-D-glucosamine-binding positions include 13 to 15, asparagine 125, arginine 162, serine 190, isoleucine 244, and glutamine 289; that span reads TGG.

The protein belongs to the glycosyltransferase 28 family. MurG subfamily.

Its subcellular location is the cell inner membrane. The enzyme catalyses di-trans,octa-cis-undecaprenyl diphospho-N-acetyl-alpha-D-muramoyl-L-alanyl-D-glutamyl-meso-2,6-diaminopimeloyl-D-alanyl-D-alanine + UDP-N-acetyl-alpha-D-glucosamine = di-trans,octa-cis-undecaprenyl diphospho-[N-acetyl-alpha-D-glucosaminyl-(1-&gt;4)]-N-acetyl-alpha-D-muramoyl-L-alanyl-D-glutamyl-meso-2,6-diaminopimeloyl-D-alanyl-D-alanine + UDP + H(+). The protein operates within cell wall biogenesis; peptidoglycan biosynthesis. Functionally, cell wall formation. Catalyzes the transfer of a GlcNAc subunit on undecaprenyl-pyrophosphoryl-MurNAc-pentapeptide (lipid intermediate I) to form undecaprenyl-pyrophosphoryl-MurNAc-(pentapeptide)GlcNAc (lipid intermediate II). This Neisseria meningitidis serogroup C (strain 053442) protein is UDP-N-acetylglucosamine--N-acetylmuramyl-(pentapeptide) pyrophosphoryl-undecaprenol N-acetylglucosamine transferase.